The primary structure comprises 234 residues: Probable transcriptional regulatory protein PFL_3960 (234 aa).

Belongs to the TACO1 family.

Its subcellular location is the cytoplasm. The chain is Probable transcriptional regulatory protein PFL_3960 from Pseudomonas fluorescens (strain ATCC BAA-477 / NRRL B-23932 / Pf-5).